The chain runs to 577 residues: Acyl-coenzyme A synthetase ACSM2B, mitochondrial (577 aa).

Residues 1-46 (MHWLRKVQGLCTLWGTQMSSRTLYINSRQLVSLQWGHQEVPAKFNF) constitute a mitochondrion transit peptide. Position 139 (glutamine 139) interacts with CoA. Residues 221-229 (TSGTSGLPK), 359-364 (EFYGQT), aspartate 446, and arginine 461 each bind ATP. Threonine 364 is a binding site for substrate. Residue 469–471 (SGY) coordinates CoA. Arginine 472 serves as a coordination point for substrate. Arginine 501 contributes to the CoA binding site. Serine 513 bears the Phosphoserine mark. Residues lysine 532 and 540 to 542 (YPR) contribute to the CoA site. Lysine 557 contributes to the ATP binding site.

It belongs to the ATP-dependent AMP-binding enzyme family. As to quaternary structure, monomer. Requires Mg(2+) as cofactor. It depends on Mn(2+) as a cofactor. In terms of tissue distribution, detected in liver.

Its subcellular location is the mitochondrion. It carries out the reaction a medium-chain fatty acid + ATP + CoA = a medium-chain fatty acyl-CoA + AMP + diphosphate. The catalysed reaction is benzoate + ATP + CoA = benzoyl-CoA + AMP + diphosphate. The enzyme catalyses hexanoate + ATP + CoA = hexanoyl-CoA + AMP + diphosphate. It catalyses the reaction butanoate + ATP + CoA = butanoyl-CoA + AMP + diphosphate. It carries out the reaction octanoate + ATP + CoA = octanoyl-CoA + AMP + diphosphate. The catalysed reaction is decanoate + ATP + CoA = decanoyl-CoA + AMP + diphosphate. Activated by monovalent cations, such as potassium, rubidium or ammonium. In terms of biological role, catalyzes the activation of fatty acids by CoA to produce an acyl-CoA, the first step in fatty acid metabolism. Capable of activating medium-chain fatty acids (e.g. butyric (C4) to decanoic (C10) acids), and certain carboxylate-containing xenobiotics, e.g. benzoate. This chain is Acyl-coenzyme A synthetase ACSM2B, mitochondrial (ACSM2B), found in Homo sapiens (Human).